Here is a 274-residue protein sequence, read N- to C-terminus: Large ribosomal subunit protein uL2cz/uL2cy (274 aa).

Residues 224–274 (NPVDHPHGGGEGRAPIGRKKPATPWGYPALGRRSRKRNKYSDNLILRRRSK) are disordered.

Belongs to the universal ribosomal protein uL2 family. As to quaternary structure, part of the 50S ribosomal subunit.

It is found in the plastid. It localises to the chloroplast. In Carica papaya (Papaya), this protein is Large ribosomal subunit protein uL2cz/uL2cy (rpl2-A).